A 175-amino-acid chain; its full sequence is ATP synthase subunit b (175 aa).

A helical transmembrane segment spans residues 22-44 (MLVQLFFFLILLALLKKFAWGPL).

This sequence belongs to the ATPase B chain family. As to quaternary structure, F-type ATPases have 2 components, F(1) - the catalytic core - and F(0) - the membrane proton channel. F(1) has five subunits: alpha(3), beta(3), gamma(1), delta(1), epsilon(1). F(0) has three main subunits: a(1), b(2) and c(10-14). The alpha and beta chains form an alternating ring which encloses part of the gamma chain. F(1) is attached to F(0) by a central stalk formed by the gamma and epsilon chains, while a peripheral stalk is formed by the delta and b chains.

The protein localises to the cell membrane. Functionally, f(1)F(0) ATP synthase produces ATP from ADP in the presence of a proton or sodium gradient. F-type ATPases consist of two structural domains, F(1) containing the extramembraneous catalytic core and F(0) containing the membrane proton channel, linked together by a central stalk and a peripheral stalk. During catalysis, ATP synthesis in the catalytic domain of F(1) is coupled via a rotary mechanism of the central stalk subunits to proton translocation. In terms of biological role, component of the F(0) channel, it forms part of the peripheral stalk, linking F(1) to F(0). This is ATP synthase subunit b from Oceanobacillus iheyensis (strain DSM 14371 / CIP 107618 / JCM 11309 / KCTC 3954 / HTE831).